Reading from the N-terminus, the 165-residue chain is Large ribosomal subunit protein uL11 (165 aa).

Serine 38 bears the Phosphoserine mark. Residue lysine 40 forms a Glycyl lysine isopeptide (Lys-Gly) (interchain with G-Cter in SUMO2) linkage. Residue lysine 48 forms a Glycyl lysine isopeptide (Lys-Gly) (interchain with G-Cter in ubiquitin) linkage. Lysine 54 carries the N6-acetyllysine modification. A Glycyl lysine isopeptide (Lys-Gly) (interchain with G-Cter in ubiquitin) cross-link involves residue lysine 83. Serine 165 carries the phosphoserine modification.

The protein belongs to the universal ribosomal protein uL11 family. Component of the large ribosomal subunit. Mature ribosomes consist of a small (40S) and a large (60S) subunit. The 40S subunit contains about 33 different proteins and 1 molecule of RNA (18S). The 60S subunit contains about 49 different proteins and 3 molecules of RNA (28S, 5.8S and 5S). Post-translationally, ubiquitinated at Lys-48 and Lys-83 by RNF14 and RNF25 in response to ribosome collisions (ribosome stalling).

Its subcellular location is the cytoplasm. In terms of biological role, component of the large ribosomal subunit. The ribosome is a large ribonucleoprotein complex responsible for the synthesis of proteins in the cell. Binds directly to 26S ribosomal RNA. In Mus musculus (Mouse), this protein is Large ribosomal subunit protein uL11 (Rpl12).